Here is a 268-residue protein sequence, read N- to C-terminus: Glycine/sarcosine N-methyltransferase (268 aa).

S-adenosyl-L-methionine is bound by residues tyrosine 26, tryptophan 34, arginine 43, alanine 67, aspartate 88, 114–115, and leucine 132; that span reads DW. The substrate site is built by asparagine 134, arginine 167, and tyrosine 206.

It belongs to the class I-like SAM-binding methyltransferase superfamily. Glycine N-methyltransferase family. As to quaternary structure, monomer.

It carries out the reaction glycine + 2 S-adenosyl-L-methionine = N,N-dimethylglycine + 2 S-adenosyl-L-homocysteine + 2 H(+). It catalyses the reaction glycine + S-adenosyl-L-methionine = sarcosine + S-adenosyl-L-homocysteine + H(+). The catalysed reaction is sarcosine + S-adenosyl-L-methionine = N,N-dimethylglycine + S-adenosyl-L-homocysteine + H(+). Its pathway is amine and polyamine biosynthesis; betaine biosynthesis via glycine pathway; betaine from glycine: step 1/3. It participates in amine and polyamine biosynthesis; betaine biosynthesis via glycine pathway; betaine from glycine: step 2/3. P-chloromercuribenzoic acid inhibits more than 95% of the GSMT activities on glycine and sarcosine, and S-adenosylhomocysteine (AdoHcy) inhibits completely GSMT activities. Catalyzes the methylation of glycine and sarcosine to sarcosine and dimethylglycine, respectively, with S-adenosylmethionine (AdoMet) acting as the methyl donor. It has strict specificity for glycine and sarcosine as the methyl group acceptors. The polypeptide is Glycine/sarcosine N-methyltransferase (Halorhodospira halochloris (Ectothiorhodospira halochloris)).